We begin with the raw amino-acid sequence, 867 residues long: Leucine--tRNA ligase (867 aa).

Residues P42–H52 carry the 'HIGH' region motif. The 'KMSKS' region motif lies at K625–S629. K628 contacts ATP.

Belongs to the class-I aminoacyl-tRNA synthetase family.

The protein resides in the cytoplasm. The enzyme catalyses tRNA(Leu) + L-leucine + ATP = L-leucyl-tRNA(Leu) + AMP + diphosphate. The chain is Leucine--tRNA ligase from Blochmanniella floridana.